Here is a 67-residue protein sequence, read N- to C-terminus: Probable tautomerase K2 (67 aa).

Catalysis depends on proline 2, which acts as the Proton acceptor; via imino nitrogen.

The protein belongs to the 4-oxalocrotonate tautomerase family.

The chain is Probable tautomerase K2 from Dickeya dadantii (strain 3937) (Erwinia chrysanthemi (strain 3937)).